The primary structure comprises 685 residues: Putative alpha-1,3-mannosyltransferase MNN14 (685 aa).

Topologically, residues methionine 1–lysine 13 are cytoplasmic. A helical transmembrane segment spans residues leucine 14–serine 34. Residues glutamine 35–leucine 685 lie on the Lumenal side of the membrane. Asparagine 199, asparagine 338, asparagine 408, and asparagine 556 each carry an N-linked (GlcNAc...) asparagine glycan.

Belongs to the MNN1/MNT family.

It localises to the golgi apparatus membrane. The protein operates within protein modification; protein glycosylation. Functionally, responsible for addition of the terminal mannose residues to the outer chain of core N-linked polysaccharides and to O-linked mannotriose. Implicated in late Golgi modifications. Involved in virulence. This chain is Putative alpha-1,3-mannosyltransferase MNN14 (MNN14), found in Candida albicans (strain SC5314 / ATCC MYA-2876) (Yeast).